Reading from the N-terminus, the 227-residue chain is Cytochrome c oxidase subunit 2 (227 aa).

Topologically, residues 1 to 14 (MAHPVQLGFQDAAS) are mitochondrial intermembrane. A helical transmembrane segment spans residues 15 to 45 (PIMEELLYFHDHTLMIMFLISSLVLYIISLM). Topologically, residues 46 to 59 (LTTKLTHTSTMDAQ) are mitochondrial matrix. A helical transmembrane segment spans residues 60-87 (EVETVWTILPAAILILIALPSLRILYMM). Residues 88–227 (DEITSPSLTL…HFEEWLLFTL (140 aa)) are Mitochondrial intermembrane-facing. Cu cation-binding residues include His161, Cys196, Glu198, Cys200, His204, and Met207. Mg(2+) is bound at residue Glu198.

It belongs to the cytochrome c oxidase subunit 2 family. Component of the cytochrome c oxidase (complex IV, CIV), a multisubunit enzyme composed of 14 subunits. The complex is composed of a catalytic core of 3 subunits MT-CO1, MT-CO2 and MT-CO3, encoded in the mitochondrial DNA, and 11 supernumerary subunits COX4I, COX5A, COX5B, COX6A, COX6B, COX6C, COX7A, COX7B, COX7C, COX8 and NDUFA4, which are encoded in the nuclear genome. The complex exists as a monomer or a dimer and forms supercomplexes (SCs) in the inner mitochondrial membrane with NADH-ubiquinone oxidoreductase (complex I, CI) and ubiquinol-cytochrome c oxidoreductase (cytochrome b-c1 complex, complex III, CIII), resulting in different assemblies (supercomplex SCI(1)III(2)IV(1) and megacomplex MCI(2)III(2)IV(2)). Found in a complex with TMEM177, COA6, COX18, COX20, SCO1 and SCO2. Interacts with TMEM177 in a COX20-dependent manner. Interacts with COX20. Interacts with COX16. The cofactor is Cu cation.

The protein localises to the mitochondrion inner membrane. It catalyses the reaction 4 Fe(II)-[cytochrome c] + O2 + 8 H(+)(in) = 4 Fe(III)-[cytochrome c] + 2 H2O + 4 H(+)(out). Its function is as follows. Component of the cytochrome c oxidase, the last enzyme in the mitochondrial electron transport chain which drives oxidative phosphorylation. The respiratory chain contains 3 multisubunit complexes succinate dehydrogenase (complex II, CII), ubiquinol-cytochrome c oxidoreductase (cytochrome b-c1 complex, complex III, CIII) and cytochrome c oxidase (complex IV, CIV), that cooperate to transfer electrons derived from NADH and succinate to molecular oxygen, creating an electrochemical gradient over the inner membrane that drives transmembrane transport and the ATP synthase. Cytochrome c oxidase is the component of the respiratory chain that catalyzes the reduction of oxygen to water. Electrons originating from reduced cytochrome c in the intermembrane space (IMS) are transferred via the dinuclear copper A center (CU(A)) of subunit 2 and heme A of subunit 1 to the active site in subunit 1, a binuclear center (BNC) formed by heme A3 and copper B (CU(B)). The BNC reduces molecular oxygen to 2 water molecules using 4 electrons from cytochrome c in the IMS and 4 protons from the mitochondrial matrix. In Varecia variegata (Black-and-white ruffed lemur), this protein is Cytochrome c oxidase subunit 2 (MT-CO2).